The primary structure comprises 189 residues: FAS1 domain-containing protein mug57 (189 aa).

Residues 1-24 (MMKLFCLNIFRFLYTTSFISAVLS) form the signal peptide. The region spanning 37 to 182 (EPRLFELLAE…GEMWVLNATL (146 aa)) is the FAS1 domain.

It is found in the cytoplasm. It localises to the nucleus. The protein resides in the membrane. Functionally, has a role in sporulation. This Schizosaccharomyces pombe (strain 972 / ATCC 24843) (Fission yeast) protein is FAS1 domain-containing protein mug57 (mug57).